A 71-amino-acid polypeptide reads, in one-letter code: Conotoxin De13.1 (71 aa).

Residues 1–19 (MSGMGVLLLVLLLVMPLAA) form the signal peptide. The propeptide occupies 20–35 (FHQDGEGEATRRSGGL). 2 positions are modified to 4-hydroxyproline: P40 and P44. The residue at position 51 (W51) is a 6'-bromotryptophan. Residue E52 is modified to 4-carboxyglutamate. Residue K55 is modified to 5-hydroxylysine. A 4-hydroxyproline modification is found at P58. At H69 the chain carries Histidine amide.

This sequence belongs to the conotoxin G superfamily. Contains 4 disulfide bonds. Expressed by the venom duct.

It is found in the secreted. This Conasprella delessertii (Sozon's cone) protein is Conotoxin De13.1.